The primary structure comprises 222 residues: Collectrin (222 aa).

The signal sequence occupies residues 1 to 14 (MLWLLFFLVTAIHA). Residues 15–141 (ELCQPGAENA…LAPPMDPSVP (127 aa)) are Extracellular-facing. In terms of domain architecture, Collectrin-like spans 21–222 (AENAFKVRLS…MTEDERLTPL (202 aa)). Residues Asn-76 and Asn-93 are each glycosylated (N-linked (GlcNAc...) asparagine). A helical transmembrane segment spans residues 142-162 (IWIIIFGVIFCIIIVAIALLI). Topologically, residues 163–222 (LSGIWQRRRKNKEPSEVDDAEDKCENMITIENGIPSDPLDMKGGHINDAFMTEDERLTPL) are cytoplasmic. Residues Thr-214 and Thr-220 each carry the phosphothreonine modification.

It belongs to the CLTRN family. In terms of assembly, monomer. Homodimer; dimerization prevents CLTRN cleavage by BACE2. Interacts with SLC6A18; this interaction regulates the trafficking of SLC6A18 to the cell membrane and its amino acid transporter activity. Interacts with SLC6A19; this interaction regulates the trafficking of SLC6A19 to the cell membrane and its amino acid transporter activity. Interacts with SNAPIN. Glycosylated. Glycosylation is required for plasma membrane localization and for its cleavage by BACE2. Post-translationally, proteolytically processed in pancreatic beta cells by BACE2 leading to the generation and extracellular release of soluble CLTRN, and a corresponding cell-associated C-terminal fragment which is later cleaved by gamma-secretase. This shedding process inactivates CLTRN. Three cleavage sites have been identified for BACE2, two clustered sites after Phe-116 and Leu-118 and a more membrane proximal site at Phe-125; the preferred BACE2 cleavage site seems to be between Phe-125 and Leu-126, Phe-116 and Leu-118 act as alternative sites. In terms of tissue distribution, kidney; collecting ducts. Pancreas; beta cells of islets.

It localises to the cell membrane. Its function is as follows. Plays an important role in amino acid transport by acting as binding partner of amino acid transporters SLC6A18 and SLC6A19, regulating their trafficking on the cell surface and their amino acid transporter activity. May also play a role in trafficking of amino acid transporters SLC3A1 and SLC7A9 to the renal cortical cell membrane. Regulator of SNARE complex function. Stimulator of beta cell replication. This chain is Collectrin, found in Homo sapiens (Human).